A 161-amino-acid polypeptide reads, in one-letter code: Nucleotide-binding protein Bcep1808_2648 (161 aa).

The protein belongs to the YajQ family.

Its function is as follows. Nucleotide-binding protein. The polypeptide is Nucleotide-binding protein Bcep1808_2648 (Burkholderia vietnamiensis (strain G4 / LMG 22486) (Burkholderia cepacia (strain R1808))).